Consider the following 363-residue polypeptide: Flagellar P-ring protein (363 aa).

An N-terminal signal peptide occupies residues 1–21 (MKTVINIFILFTFLASLSANA).

It belongs to the FlgI family. As to quaternary structure, the basal body constitutes a major portion of the flagellar organelle and consists of four rings (L,P,S, and M) mounted on a central rod.

It localises to the periplasm. The protein resides in the bacterial flagellum basal body. In terms of biological role, assembles around the rod to form the L-ring and probably protects the motor/basal body from shearing forces during rotation. This Colwellia psychrerythraea (strain 34H / ATCC BAA-681) (Vibrio psychroerythus) protein is Flagellar P-ring protein.